The primary structure comprises 1639 residues: RIMS-binding protein 3A (1639 aa).

Disordered regions lie at residues 1 to 22 (MAKDSPSPLGASPKKPGCSSPA), 215 to 240 (GSPDPQAVHSLEEPLPQTSSGSCHAP), and 295 to 364 (SLDS…LTPS). Residues 21–143 (PAAAVLENQR…ELQRQLAEEL (123 aa)) adopt a coiled-coil conformation. The segment covering 326–339 (SPPPSPLPPPPPPS) has biased composition (pro residues). Coiled coils occupy residues 409 to 442 (QADEKVKRLKVKRAELTGLARRLADRARKLQETN) and 480 to 619 (LAKD…AEEN). The disordered stretch occupies residues 697–811 (CRPGHPPEQP…DRDTASEVDD (115 aa)). Composition is skewed to polar residues over residues 707-718 (WETSQMPESQVK) and 761-775 (SVPQVSETVPASQPL). Over residues 776 to 790 (SKKTSSQSNSSSEGS) the composition is skewed to low complexity. Positions 832–899 (PKLKIFMAQY…PSNFVEQIPD (68 aa)) constitute an SH3 1 domain. Fibronectin type-III domains lie at 995–1083 (APMQ…TLLA) and 1088–1184 (PPLD…IPED). Disordered regions lie at residues 1251–1273 (PRRQSPVSNLGSEGECPSSGAGS) and 1292–1330 (QKSPQNHRPPSVSDQPGEKENCSQHMGTSKSPAPGFIHL). Residues 1293-1305 (KSPQNHRPPSVSD) are compositionally biased toward polar residues. 2 consecutive SH3 domains span residues 1452–1520 (TPAR…EMEV) and 1569–1636 (WTPK…HMSL).

It belongs to the RIMBP family. In terms of assembly, interacts with LRGUK (via guanylate kinase-like domain). Interacts (via C-terminus) with HOOK1 (via coiled-coil region).

It is found in the cytoplasm. Its subcellular location is the cytoskeleton. Probable component of the manchette, a microtubule-based structure which plays a key role in sperm head morphogenesis during late stages of sperm development. The sequence is that of RIMS-binding protein 3A (RIMBP3) from Homo sapiens (Human).